The following is a 185-amino-acid chain: MIDETLLEAEEKMERAIEHAKEEFGAIRTGRANAAMFSKIVIDYYGSPTPLPQMASIGVPEPRMVIIKPYDTSQTNAMEKAIRDSDLGVNPNNEGNQLRILLPQMTEERRREMIKVARHKGEEAKVAVRNVRRKAKEELDRLVKAGEVGEDDGRRAEKELDDLTQRFVGTVDELIKHKEAELLEV.

This sequence belongs to the RRF family.

The protein resides in the cytoplasm. In terms of biological role, responsible for the release of ribosomes from messenger RNA at the termination of protein biosynthesis. May increase the efficiency of translation by recycling ribosomes from one round of translation to another. In Salinispora tropica (strain ATCC BAA-916 / DSM 44818 / JCM 13857 / NBRC 105044 / CNB-440), this protein is Ribosome-recycling factor.